The chain runs to 539 residues: 2,3-bisphosphoglycerate-independent phosphoglycerate mutase (539 aa).

Positions 37 and 86 each coordinate Mn(2+). Serine 86 is a catalytic residue. Residues histidine 147, 177-178 (RD), arginine 210, arginine 216, 284-287 (RADR), and lysine 359 contribute to the substrate site. Aspartate 426, histidine 430, aspartate 467, histidine 468, and histidine 485 together coordinate Mn(2+).

The protein belongs to the BPG-independent phosphoglycerate mutase family. Mg(2+) is required as a cofactor. Mn(2+) serves as cofactor. In terms of tissue distribution, expressed ubiquitously. High expression levels in the nerve ring region, intestine and body wall muscles.

The catalysed reaction is (2R)-2-phosphoglycerate = (2R)-3-phosphoglycerate. It participates in carbohydrate degradation; glycolysis; pyruvate from D-glyceraldehyde 3-phosphate: step 3/5. Activity is not affected by 2,3-bisphosphoglycerate. Its function is as follows. Catalyzes the interconversion of 2-phosphoglycerate and 3-phosphoglycerate. This is 2,3-bisphosphoglycerate-independent phosphoglycerate mutase from Caenorhabditis elegans.